The primary structure comprises 338 residues: Aspartate carbamoyltransferase catalytic subunit (338 aa).

The carbamoyl phosphate site is built by R59 and T60. Position 87 (K87) interacts with L-aspartate. The carbamoyl phosphate site is built by R109, H142, and Q145. Positions 182 and 253 each coordinate L-aspartate. Residues G294 and P295 each coordinate carbamoyl phosphate.

This sequence belongs to the aspartate/ornithine carbamoyltransferase superfamily. ATCase family. In terms of assembly, heterododecamer (2C3:3R2) of six catalytic PyrB chains organized as two trimers (C3), and six regulatory PyrI chains organized as three dimers (R2).

It carries out the reaction carbamoyl phosphate + L-aspartate = N-carbamoyl-L-aspartate + phosphate + H(+). The protein operates within pyrimidine metabolism; UMP biosynthesis via de novo pathway; (S)-dihydroorotate from bicarbonate: step 2/3. In terms of biological role, catalyzes the condensation of carbamoyl phosphate and aspartate to form carbamoyl aspartate and inorganic phosphate, the committed step in the de novo pyrimidine nucleotide biosynthesis pathway. This Prochlorococcus marinus (strain SARG / CCMP1375 / SS120) protein is Aspartate carbamoyltransferase catalytic subunit.